A 100-amino-acid polypeptide reads, in one-letter code: NADH-quinone oxidoreductase subunit K 2 (100 aa).

3 consecutive transmembrane segments (helical) span residues 4–24, 29–49, and 60–80; these read LNNY…GVLV, IVIF…FIAF, and IFVF…LALM.

Belongs to the complex I subunit 4L family. As to quaternary structure, NDH-1 is composed of 14 different subunits. Subunits NuoA, H, J, K, L, M, N constitute the membrane sector of the complex.

It is found in the cell inner membrane. The enzyme catalyses a quinone + NADH + 5 H(+)(in) = a quinol + NAD(+) + 4 H(+)(out). Functionally, NDH-1 shuttles electrons from NADH, via FMN and iron-sulfur (Fe-S) centers, to quinones in the respiratory chain. The immediate electron acceptor for the enzyme in this species is believed to be ubiquinone. Couples the redox reaction to proton translocation (for every two electrons transferred, four hydrogen ions are translocated across the cytoplasmic membrane), and thus conserves the redox energy in a proton gradient. The protein is NADH-quinone oxidoreductase subunit K 2 of Geotalea uraniireducens (strain Rf4) (Geobacter uraniireducens).